Here is a 188-residue protein sequence, read N- to C-terminus: Protein SSX3 (188 aa).

The region spanning Lys-20–Asp-83 is the KRAB-related domain. The disordered stretch occupies residues Pro-113–His-162. Residues Lys-115–Pro-127 are compositionally biased toward basic and acidic residues. Ser-123 carries the post-translational modification Phosphoserine.

The protein belongs to the SSX family. In terms of assembly, interacts with SSX2IP.

Could act as a modulator of transcription. The protein is Protein SSX3 (SSX3) of Homo sapiens (Human).